We begin with the raw amino-acid sequence, 237 residues long: Proteasome subunit beta type-1-B (237 aa).

This sequence belongs to the peptidase T1B family. The 26S proteasome consists of a 20S proteasome core and two 19S regulatory subunits. The 20S proteasome core is composed of 28 subunits that are arranged in four stacked rings, resulting in a barrel-shaped structure. The two end rings are each formed by seven alpha subunits, and the two central rings are each formed by seven beta subunits. The catalytic chamber with the active sites is on the inside of the barrel.

Its subcellular location is the cytoplasm. The protein localises to the nucleus. Its function is as follows. Non-catalytic component of the proteasome, a multicatalytic proteinase complex which is characterized by its ability to cleave peptides with Arg, Phe, Tyr, Leu, and Glu adjacent to the leaving group at neutral or slightly basic pH. The proteasome has an ATP-dependent proteolytic activity. In Carassius auratus (Goldfish), this protein is Proteasome subunit beta type-1-B (psmb1-B).